The primary structure comprises 121 residues: Large ribosomal subunit protein uL14c (121 aa).

The protein belongs to the universal ribosomal protein uL14 family. Part of the 50S ribosomal subunit.

It localises to the plastid. It is found in the apicoplast. In terms of biological role, binds to 23S rRNA. The chain is Large ribosomal subunit protein uL14c (rpl14) from Eimeria tenella (Coccidian parasite).